Reading from the N-terminus, the 171-residue chain is Transcriptional repressor NrdR (171 aa).

The disordered stretch occupies residues 1 to 21; that stretch reads MQCPHCQHTDSRVLESRSSEN. Residues 3-34 fold into a zinc finger; the sequence is CPHCQHTDSRVLESRSSENGQSIRRRRECLQC. Basic and acidic residues predominate over residues 7–18; that stretch reads QHTDSRVLESRS. The region spanning 49–139 is the ATP-cone domain; the sequence is ITVIKKDGKR…VYGNFQGIRD (91 aa).

Belongs to the NrdR family. Zn(2+) is required as a cofactor.

Its function is as follows. Negatively regulates transcription of bacterial ribonucleotide reductase nrd genes and operons by binding to NrdR-boxes. The chain is Transcriptional repressor NrdR from Microcystis aeruginosa (strain NIES-843 / IAM M-2473).